Here is a 194-residue protein sequence, read N- to C-terminus: Small COPII coat GTPase SAR1B (194 aa).

The STAR; SAR1-N-terminal activation recruitment. Required for the activation and subsequent recruitment to ER membrane motif lies at 2 to 4 (FLV). Positions 10–14 (MFLWL) are mediates recruitment to ER membranes. GDP is bound by residues asparagine 30, alanine 31, glycine 32, lysine 33, threonine 34, and threonine 35. Asparagine 30 is a GTP binding site. Positions 32, 33, 34, and 35 each coordinate GTP. Aspartate 70 contributes to the Mg(2+) binding site. GDP contacts are provided by lysine 131, aspartate 133, and isoleucine 172. Residues lysine 131, aspartate 133, and isoleucine 172 each contribute to the GTP site.

This sequence belongs to the small GTPase superfamily. SAR1 family. As to quaternary structure, homodimer; upon association with membrane. Part of the coat protein complex II/COPII, composed of SEC23/24 and SEC13/31 heterodimers, that it helps recruit and assemble on endoplasmic reticulum (ER) membranes at ER exit sites.

The protein localises to the endoplasmic reticulum membrane. It localises to the golgi apparatus. Its subcellular location is the golgi stack membrane. The protein resides in the cytoplasm. It is found in the cytosol. The enzyme catalyses GTP + H2O = GDP + phosphate + H(+). Its activity is regulated as follows. Small GTPases activation is mediated by guanine exchange factors (GEF), while inactivation through hydrolysis of the bound GTP is stimulated by GTPase activating proteins (GAP). Small GTPase that cycles between an active GTP-bound and an inactive GDP-bound state and mainly functions in vesicle-mediated endoplasmic reticulum (ER) to Golgi transport. The active GTP-bound form inserts into the endoplasmic reticulum membrane where it recruits the remainder of the coat protein complex II/COPII. The coat protein complex II assembling and polymerizing on endoplasmic reticulum membrane is responsible for both the sorting of cargos and the deformation and budding of membranes into vesicles destined to the Golgi. This chain is Small COPII coat GTPase SAR1B (sarB), found in Dictyostelium discoideum (Social amoeba).